A 238-amino-acid chain; its full sequence is Uridylate kinase (238 aa).

12 to 15 serves as a coordination point for ATP; it reads KLSG. G54 provides a ligand contact to UMP. Positions 55 and 59 each coordinate ATP. UMP-binding positions include D74 and 135–142; that span reads TGNPFFTT. Residues T162, N163, Y168, and D171 each coordinate ATP.

Belongs to the UMP kinase family. As to quaternary structure, homohexamer.

The protein localises to the cytoplasm. The catalysed reaction is UMP + ATP = UDP + ADP. It functions in the pathway pyrimidine metabolism; CTP biosynthesis via de novo pathway; UDP from UMP (UMPK route): step 1/1. With respect to regulation, inhibited by UTP. Catalyzes the reversible phosphorylation of UMP to UDP. The protein is Uridylate kinase of Rhodopseudomonas palustris (strain BisB18).